Consider the following 329-residue polypeptide: MVIELIINTPSRLHLTLIDLNGERGRLDGGVGITLNEPELVVGLEASDDMGVEFTSHAEGKLREEYRSKIMEAARRTLKHIGSDEKFHFTVRSMFPAHSGLGSGTQLSLATARLVAEYHGMKFTARELAHIVGRGGTSGIGVASFEDGGFIVDAGHSSREKSDFLPSSASSASPPPVIARYDFPEEWNIIIAIPEIDRSVSGRREVNIFQEYCPLPLRDVERLSHIILMKMMPAILEGDIEAFGESVNEIQGTGFKRIERELQDPLIDRIIDSMISAGAPGAGMSSFGPAVYSVTDEKPGNVAGAVAEIMGPGRIIVTGGRNRGAFMIK.

This sequence belongs to the beta-RFA-P synthase family. As to quaternary structure, homodimer. Requires Mg(2+) as cofactor.

It carries out the reaction 5-phospho-alpha-D-ribose 1-diphosphate + 4-hydroxybenzoate + H(+) = 4-(beta-D-ribofuranosyl)phenol 5'-phosphate + CO2 + diphosphate. The catalysed reaction is 4-aminobenzoate + 5-phospho-alpha-D-ribose 1-diphosphate + H(+) = 4-(beta-D-ribofuranosyl)aminobenzene 5'-phosphate + CO2 + diphosphate. It functions in the pathway cofactor biosynthesis; 5,6,7,8-tetrahydromethanopterin biosynthesis. Its function is as follows. Catalyzes the condensation of 4-hydroxybenzoate (HB) with 5-phospho-alpha-D-ribose 1-diphosphate (PRPP) to produce beta-ribofuranosylphenol 5'-phosphate (beta-RFH-P). Also catalyzes the condensation of 4-aminobenzoate (pABA) with PRPP to produce beta-ribofuranosylaminobenzene 5'-phosphate (beta-RFA-P). Only 4-hydroxybenzoate is known to be biosynthesized by methanogenic archaea, but 4-aminobenzoate can be used as substrate by growing methanogens when it is present in the growth medium. The protein is Beta-ribofuranosylphenol 5'-phosphate synthase of Methanothermobacter thermautotrophicus (strain ATCC 29096 / DSM 1053 / JCM 10044 / NBRC 100330 / Delta H) (Methanobacterium thermoautotrophicum).